A 331-amino-acid polypeptide reads, in one-letter code: MARMYYDEDANLDLLAGKTIAIIGYGSQGHAHALNLKDSGLNVIVGLYPGSKSAEKAQAAGLTVKNVADAANVADFIMILLPDEVQKTVYKNEIEPNLQEGNTLAFAHGFNIHFGQVVPPANVDVVMVAPKGPGHLVRRTYEQGQGVPALFAVYQDASGKARDRALSYAKGIGGTRGGVLETTFREETETDLFGEQAVLCGGLSALIKAGFETLVEAGYQPELAYFECLHEVKLIVDLVVEGGLAKMRDSISNTAEYGDYTRGPRIVNEQTKAEMRKVLSEIQSGQFAREFVLENQSGKPGFTAMRRQEAEHPIEEVGKDLRAMFSWLKKV.

The KARI N-terminal Rossmann domain occupies 2-182; that stretch reads ARMYYDEDAN…GGTRGGVLET (181 aa). NADP(+) contacts are provided by residues 25–28, Ser-51, Ser-53, and 83–86; these read YGSQ and DEVQ. The active site involves His-108. Gly-134 lines the NADP(+) pocket. Positions 183 to 328 constitute a KARI C-terminal knotted domain; the sequence is TFREETETDL…KDLRAMFSWL (146 aa). Residues Asp-191, Glu-195, Glu-227, and Glu-231 each coordinate Mg(2+). Residue Ser-252 participates in substrate binding.

The protein belongs to the ketol-acid reductoisomerase family. Mg(2+) is required as a cofactor.

The catalysed reaction is (2R)-2,3-dihydroxy-3-methylbutanoate + NADP(+) = (2S)-2-acetolactate + NADPH + H(+). It catalyses the reaction (2R,3R)-2,3-dihydroxy-3-methylpentanoate + NADP(+) = (S)-2-ethyl-2-hydroxy-3-oxobutanoate + NADPH + H(+). It participates in amino-acid biosynthesis; L-isoleucine biosynthesis; L-isoleucine from 2-oxobutanoate: step 2/4. It functions in the pathway amino-acid biosynthesis; L-valine biosynthesis; L-valine from pyruvate: step 2/4. In terms of biological role, involved in the biosynthesis of branched-chain amino acids (BCAA). Catalyzes an alkyl-migration followed by a ketol-acid reduction of (S)-2-acetolactate (S2AL) to yield (R)-2,3-dihydroxy-isovalerate. In the isomerase reaction, S2AL is rearranged via a Mg-dependent methyl migration to produce 3-hydroxy-3-methyl-2-ketobutyrate (HMKB). In the reductase reaction, this 2-ketoacid undergoes a metal-dependent reduction by NADPH to yield (R)-2,3-dihydroxy-isovalerate. This is Ketol-acid reductoisomerase (NADP(+)) from Trichormus variabilis (strain ATCC 29413 / PCC 7937) (Anabaena variabilis).